The following is a 218-amino-acid chain: Glutathione S-transferase Mu 5 (218 aa).

The 87-residue stretch at 2–88 (PMTLGYWDIR…YIARKHNLCG (87 aa)) folds into the GST N-terminal domain. Glutathione contacts are provided by residues 7–8 (YW), 46–50 (WLNEK), 59–60 (NL), and 72–73 (QS). One can recognise a GST C-terminal domain in the interval 90 to 207 (TEEEKIRVDI…MKSSQFLRGL (118 aa)). Tyr-116 is a binding site for substrate.

This sequence belongs to the GST superfamily. Mu family. As to quaternary structure, homodimer.

The protein localises to the cytoplasm. It catalyses the reaction RX + glutathione = an S-substituted glutathione + a halide anion + H(+). Conjugation of reduced glutathione to a wide number of exogenous and endogenous hydrophobic electrophiles. This chain is Glutathione S-transferase Mu 5 (GSTM5), found in Homo sapiens (Human).